A 204-amino-acid polypeptide reads, in one-letter code: MRG/MORF4L-binding protein (204 aa).

Over residues 1 to 15 the composition is skewed to gly residues; it reads MGEAEVGGTGAPGDK. Positions 1 to 27 are disordered; that stretch reads MGEAEVGGTGAPGDKGPGEAAPSPAEE. An N-acetylglycine modification is found at Gly2. At Ser23 the chain carries Phosphoserine. Lys127 participates in a covalent cross-link: Glycyl lysine isopeptide (Lys-Gly) (interchain with G-Cter in SUMO2). 2 stretches are compositionally biased toward basic and acidic residues: residues 128–140 and 153–175; these read EEMK…HSGA and ALEK…EGAD. The tract at residues 128–204 is disordered; that stretch reads EEMKEDVDPH…SPSAAKRRRT (77 aa). Low complexity predominate over residues 189 to 198; it reads ANSNPSSPSA. Phosphoserine is present on residues Ser191 and Ser195.

This sequence belongs to the EAF7 family. Component of the NuA4 histone acetyltransferase complex which contains the catalytic subunit KAT5/TIP60 and the subunits EP400, TRRAP/PAF400, BRD8/SMAP, EPC1, DMAP1/DNMAP1, RUVBL1/TIP49, RUVBL2, ING3, actin, ACTL6A/BAF53A, MORF4L1/MRG15, MORF4L2/MRGX, MRGBP, YEATS4/GAS41, VPS72/YL1 and MEAF6. MRGBP may interact directly with MORF4L1/MRG15 and MORF4L2/MRGX.

The protein localises to the nucleus. Component of the NuA4 histone acetyltransferase (HAT) complex which is involved in transcriptional activation of select genes principally by acetylation of nucleosomal histones H4 and H2A. This modification may both alter nucleosome - DNA interactions and promote interaction of the modified histones with other proteins which positively regulate transcription. This complex may be required for the activation of transcriptional programs associated with oncogene and proto-oncogene mediated growth induction, tumor suppressor mediated growth arrest and replicative senescence, apoptosis, and DNA repair. NuA4 may also play a direct role in DNA repair when recruited to sites of DNA damage. The protein is MRG/MORF4L-binding protein (Mrgbp) of Mus musculus (Mouse).